We begin with the raw amino-acid sequence, 212 residues long: MGRGKIEIKRIENSSNRQVTYSKRRNGIIKKAKEITVLCDAKVSLIIFGNSGKMHEYCSPSTTLPDMLDGYQKTSGRRLWDAKHENLSNEIDRIKKENDNMQVKLRHLKGEDINSLNHKELMVLEEGLTNGLSSISAKQSEILRMVRKNDQILEEEHKQLQYALHQKEMAAMGGNMRMIEEVYHQRDRDYEYQQMPFALRVQPMQPNLHERM.

In terms of domain architecture, MADS-box spans 3 to 58; that stretch reads RGKIEIKRIENSSNRQVTYSKRRNGIIKKAKEITVLCDAKVSLIIFGNSGKMHEYC. Residues 84 to 170 form the K-box domain; that stretch reads HENLSNEIDR…QYALHQKEMA (87 aa).

Predominantly expressed in petals and stamens, less in carpels and sepals.

The protein localises to the nucleus. Functionally, transcription factor involved in the genetic control of flower development. This Petunia hybrida (Petunia) protein is Floral homeotic protein PMADS 2 (PMADS2).